A 374-amino-acid chain; its full sequence is Transcription termination factor 1, mitochondrial (374 aa).

A mitochondrion-targeting transit peptide spans 1 to 37 (MASRNIWRVRRNFLFDLRGWVPQYSAEVFLKSIPFRP). Interaction with DNA regions lie at residues 146-147 (RS), 224-228 (QSTKR), 301-308 (SEKKFNDK), 332-335 (SIHT), and 361-368 (SQRRYEAK).

This sequence belongs to the mTERF family. Monomer. Post-translationally, is a phosphoprotein. While the DNA-binding activity is unaffected by the phosphorylation/dephosphorylation state, only the phosphorylated form of the protein is active for termination activity. Functioning seems to be regulated by phosphorylation.

It is found in the mitochondrion. Its function is as follows. Transcription termination factor. Binds to a 28 bp region within the tRNA(Leu(uur)) gene at a position immediately adjacent to and downstream of the 16S rRNA gene; this region comprises a tridecamer sequence critical for directing accurate termination. Binds DNA along the major grove and promotes DNA bending and partial unwinding. Promotes base flipping. Transcription termination activity appears to be polarized with highest specificity for transcripts initiated on the light strand. This is Transcription termination factor 1, mitochondrial (Mterf1) from Rattus norvegicus (Rat).